Reading from the N-terminus, the 22-residue chain is Myofibril-bound serine protease (22 aa).

It belongs to the peptidase S1 family. Detected in muscle (at protein level).

The protein resides in the cytoplasm. With respect to regulation, inhibited by the serine protease inhibitors, antipain, aprotinin, DFP, leupeptin, STI and TLCK, and by the cysteine proteinase inhibitors DTNB and to a lesser extent E-64. Not inhibited by the metalloproteinase inhibitor EDTA. Functionally, serine protease that selectively cleaves Arg-|-Xaa bonds. The chain is Myofibril-bound serine protease from Cyprinus carpio (Common carp).